The following is a 229-amino-acid chain: Sugar fermentation stimulation protein homolog (229 aa).

Belongs to the SfsA family.

This is Sugar fermentation stimulation protein homolog from Carboxydothermus hydrogenoformans (strain ATCC BAA-161 / DSM 6008 / Z-2901).